A 492-amino-acid chain; its full sequence is ERAD-associated E3 ubiquitin-protein ligase HRD1A (492 aa).

The Cytoplasmic portion of the chain corresponds to 1-3; sequence MIR. Residues 4-24 form a helical membrane-spanning segment; that stretch reads LRTYAGLSFMATLAVIYHAFS. Over 25-40 the chain is Lumenal; it reads SRGQFYPATVYLSTSK. A helical transmembrane segment spans residues 41-61; that stretch reads ISLVLLLNMCLVLMLSLWHLV. Over 62-98 the chain is Cytoplasmic; sequence KFVFLGSLREAEVERLNEQAWRELMEILFAITIFRQD. A helical transmembrane segment spans residues 99-119; sequence FSSGFLPLVVTLLLIKALHWL. Residues 120–135 lie on the Lumenal side of the membrane; sequence AQKRVEYIETTPSVSK. A helical membrane pass occupies residues 136-156; the sequence is LSHFRIVSFMGFLLLVDSLFM. At 157–170 the chain is on the cytoplasmic side; the sequence is YSSIRHLIQSRQAS. A helical transmembrane segment spans residues 171-191; it reads VSLFFSFEYMILATTTVAIFV. Topologically, residues 192 to 221 are lumenal; it reads KYVFYVTDMLMDGQWEKKPVYTFYLELIRD. Residues 222–242 form a helical membrane-spanning segment; sequence LLHLSMYICFFFVIFMNYGVP. At 243–492 the chain is on the cytoplasmic side; the sequence is LHLLRELYET…KGKSVADAAE (250 aa). An RING-type; atypical zinc finger spans residues 292 to 330; sequence CIICREEMTNAKKLICGHLFHVHCLRSWLERQQTCPTCR. Disordered regions lie at residues 339-379 and 470-492; these read ATSA…NSLS and ETRKPESAGEPENKGKSVADAAE. The segment covering 351–378 has biased composition (low complexity); that stretch reads QGSQQGTSSSGNQGSEISSSAGVSNNSL. Residues 470–486 are compositionally biased toward basic and acidic residues; the sequence is ETRKPESAGEPENKGKS.

It belongs to the HRD1 family.

The protein resides in the endoplasmic reticulum membrane. It carries out the reaction S-ubiquitinyl-[E2 ubiquitin-conjugating enzyme]-L-cysteine + [acceptor protein]-L-lysine = [E2 ubiquitin-conjugating enzyme]-L-cysteine + N(6)-ubiquitinyl-[acceptor protein]-L-lysine.. The protein operates within protein modification; protein ubiquitination. Functionally, probable component of the HRD1 ubiquitin ligase complex that mediates the rapid degradation of misfolded endoplasmic reticulum (ER) proteins, a process called ER-associated degradation (ERAD). Targets the misfolded LRR receptor kinase BRI1. Functions redundantly with HRD3B. The chain is ERAD-associated E3 ubiquitin-protein ligase HRD1A from Arabidopsis thaliana (Mouse-ear cress).